A 415-amino-acid polypeptide reads, in one-letter code: Leucine-rich repeat-containing protein 34 (415 aa).

LRR repeat units lie at residues 246–272 (SLRY…LKSN) and 274–296 (TLEV…LSET).

Interacts with NPM1 and NCL. In terms of tissue distribution, expressed in testis where it specifically localizes to germ cells (at protein level). Not detected in other tissues tested (at protein level). Expressed in pluripotent embryonic stem cells and multipotent adult germline stem cells.

It is found in the nucleus. The protein localises to the nucleolus. Its subcellular location is the cytoplasm. Highly expressed in stem cells where it may be involved in regulation of pluripotency. In embryonic stem cells (ESCs), important for normal expression of the pluripotency regulators POU5F1/OCT4 and KLF4. Also important for expression of the ectodermal marker gene NES and the endodermal marker gene GATA4. Promotes stem cell proliferation in vitro. The polypeptide is Leucine-rich repeat-containing protein 34 (Mus musculus (Mouse)).